Consider the following 750-residue polypeptide: Phosphoribosylformylglycinamidine synthase subunit PurL (750 aa).

The active site involves His54. ATP is bound by residues Tyr57 and Lys101. Glu103 provides a ligand contact to Mg(2+). Residues 104–107 and Arg126 each bind substrate; that span reads SHNH. His105 acts as the Proton acceptor in catalysis. Mg(2+) is bound at residue Asp127. A substrate-binding site is contributed by Gln251. Asp279 provides a ligand contact to Mg(2+). 323–325 provides a ligand contact to substrate; sequence ESQ. ATP contacts are provided by Asp509 and Gly546. Asn547 is a binding site for Mg(2+). A substrate-binding site is contributed by Ser549.

The protein belongs to the FGAMS family. In terms of assembly, monomer. Part of the FGAM synthase complex composed of 1 PurL, 1 PurQ and 2 PurS subunits.

Its subcellular location is the cytoplasm. It catalyses the reaction N(2)-formyl-N(1)-(5-phospho-beta-D-ribosyl)glycinamide + L-glutamine + ATP + H2O = 2-formamido-N(1)-(5-O-phospho-beta-D-ribosyl)acetamidine + L-glutamate + ADP + phosphate + H(+). The protein operates within purine metabolism; IMP biosynthesis via de novo pathway; 5-amino-1-(5-phospho-D-ribosyl)imidazole from N(2)-formyl-N(1)-(5-phospho-D-ribosyl)glycinamide: step 1/2. Part of the phosphoribosylformylglycinamidine synthase complex involved in the purines biosynthetic pathway. Catalyzes the ATP-dependent conversion of formylglycinamide ribonucleotide (FGAR) and glutamine to yield formylglycinamidine ribonucleotide (FGAM) and glutamate. The FGAM synthase complex is composed of three subunits. PurQ produces an ammonia molecule by converting glutamine to glutamate. PurL transfers the ammonia molecule to FGAR to form FGAM in an ATP-dependent manner. PurS interacts with PurQ and PurL and is thought to assist in the transfer of the ammonia molecule from PurQ to PurL. The polypeptide is Phosphoribosylformylglycinamidine synthase subunit PurL (Cutibacterium acnes (strain DSM 16379 / KPA171202) (Propionibacterium acnes)).